Here is a 112-residue protein sequence, read N- to C-terminus: Small ribosomal subunit protein bS6 (112 aa).

The protein belongs to the bacterial ribosomal protein bS6 family.

Functionally, binds together with bS18 to 16S ribosomal RNA. The sequence is that of Small ribosomal subunit protein bS6 from Chlamydia caviae (strain ATCC VR-813 / DSM 19441 / 03DC25 / GPIC) (Chlamydophila caviae).